Reading from the N-terminus, the 237-residue chain is MQKQELLYKGKAKSVYETEDNDLLILHFRDDTSALDGKRIEQLARKGVVNNRFNAFIMQKLADAGIETHFEKQLSDDEVLVKRLDMIPVECVVRNFAAGSLVRRLGLEEGQALTPPTYELFYKDDALGDPMVNESISISLGWANDAQLVKMKELSHQVNEVLTALFDAGDLILVDFKLEFGVFHDRIVLGDEFSPDGCRIWDKATKKKLDKDRFRQSLGDVIEAYEEVASRIGVPLS.

It belongs to the SAICAR synthetase family.

It carries out the reaction 5-amino-1-(5-phospho-D-ribosyl)imidazole-4-carboxylate + L-aspartate + ATP = (2S)-2-[5-amino-1-(5-phospho-beta-D-ribosyl)imidazole-4-carboxamido]succinate + ADP + phosphate + 2 H(+). It functions in the pathway purine metabolism; IMP biosynthesis via de novo pathway; 5-amino-1-(5-phospho-D-ribosyl)imidazole-4-carboxamide from 5-amino-1-(5-phospho-D-ribosyl)imidazole-4-carboxylate: step 1/2. This Psychrobacter cryohalolentis (strain ATCC BAA-1226 / DSM 17306 / VKM B-2378 / K5) protein is Phosphoribosylaminoimidazole-succinocarboxamide synthase.